The primary structure comprises 401 residues: Elongation factor Tu (401 aa).

Residues 10-211 (KPHLNVGTIG…ALDTFVPNPK (202 aa)) form the tr-type G domain. The interval 19 to 26 (GHVDHGKT) is G1. Residue 19-26 (GHVDHGKT) coordinates GTP. Thr26 contacts Mg(2+). A G2 region spans residues 62–66 (GITIA). The tract at residues 83 to 86 (DCPG) is G3. GTP contacts are provided by residues 83 to 87 (DCPGH) and 138 to 141 (NKAD). Residues 138–141 (NKAD) form a G4 region. The interval 179 to 181 (SAV) is G5.

Belongs to the TRAFAC class translation factor GTPase superfamily. Classic translation factor GTPase family. EF-Tu/EF-1A subfamily. Monomer.

Its subcellular location is the cytoplasm. The catalysed reaction is GTP + H2O = GDP + phosphate + H(+). In terms of biological role, GTP hydrolase that promotes the GTP-dependent binding of aminoacyl-tRNA to the A-site of ribosomes during protein biosynthesis. The sequence is that of Elongation factor Tu from Leptospira borgpetersenii serovar Hardjo-bovis (strain JB197).